The sequence spans 338 residues: Fructose-1,6-bisphosphatase class 1 1 (338 aa).

4 residues coordinate Mg(2+): E94, D116, L118, and D119. Substrate is bound by residues 119–122, N210, and K276; that span reads DGSS. E282 contacts Mg(2+).

Belongs to the FBPase class 1 family. As to quaternary structure, homotetramer. Requires Mg(2+) as cofactor.

The protein resides in the cytoplasm. The catalysed reaction is beta-D-fructose 1,6-bisphosphate + H2O = beta-D-fructose 6-phosphate + phosphate. The protein operates within carbohydrate biosynthesis; gluconeogenesis. This Paraburkholderia xenovorans (strain LB400) protein is Fructose-1,6-bisphosphatase class 1 1.